Reading from the N-terminus, the 383-residue chain is S-adenosylmethionine synthase (383 aa).

His15 provides a ligand contact to ATP. Asp17 is a binding site for Mg(2+). Residue Glu43 coordinates K(+). L-methionine-binding residues include Glu56 and Gln99. A flexible loop region spans residues 99–109; sequence QSPDINQGVDR. ATP is bound by residues 164–166, 230–231, Asp239, 245–246, Ala262, and Lys266; these read DAK, RF, and RK. Position 239 (Asp239) interacts with L-methionine. An L-methionine-binding site is contributed by Lys270.

Belongs to the AdoMet synthase family. As to quaternary structure, homotetramer; dimer of dimers. Requires Mg(2+) as cofactor. The cofactor is K(+).

Its subcellular location is the cytoplasm. The catalysed reaction is L-methionine + ATP + H2O = S-adenosyl-L-methionine + phosphate + diphosphate. It functions in the pathway amino-acid biosynthesis; S-adenosyl-L-methionine biosynthesis; S-adenosyl-L-methionine from L-methionine: step 1/1. Catalyzes the formation of S-adenosylmethionine (AdoMet) from methionine and ATP. The overall synthetic reaction is composed of two sequential steps, AdoMet formation and the subsequent tripolyphosphate hydrolysis which occurs prior to release of AdoMet from the enzyme. The protein is S-adenosylmethionine synthase of Pseudoalteromonas translucida (strain TAC 125).